A 152-amino-acid chain; its full sequence is MAKRVQVVLNESINKLGKDGDLVEVAPGYARNYLLPQKLATLATPGILKQVEQRREKERQRLLAEKQQAEGQKTALETIKRFTIRKEVGEGEAIFGTVTTSEVAEAIQAATNQEVDRKGITVPDINKTGFYEATVKLHPEVTATIEIQVAPL.

This sequence belongs to the bacterial ribosomal protein bL9 family.

Binds to the 23S rRNA. This chain is Large ribosomal subunit protein bL9, found in Crocosphaera subtropica (strain ATCC 51142 / BH68) (Cyanothece sp. (strain ATCC 51142)).